The primary structure comprises 243 residues: MSKKLKPFEILEDSCASVCIWLNGEPTAISNRAENLWNKAKYRVATDGAVNEILKRKSFVEWPHIICGDFDSINKQIDTKNAKVVHLPDQDYTDLSKSVQWCLEQKTLTSWEFENIVVLGGLNGRFDHTMSTLSSLIRFVDSQTPVIVLDSRNLVLAVPTGDSNLDVNLEMTTKMCGIIPIVQKETIVSSIGLKYEMENLALEFGKLISTSNEVTTSQVFLKSSSSLIFSIELENWVYKLDSL.

Belongs to the thiamine pyrophosphokinase family.

The catalysed reaction is thiamine + ATP = thiamine diphosphate + AMP + H(+). It participates in cofactor biosynthesis; thiamine diphosphate biosynthesis; thiamine diphosphate from thiamine: step 1/1. Catalyzes the phosphorylation of thiamine to thiamine pyrophosphate. Functions cell non-autonomously. This chain is Thiamin pyrophosphokinase 1, found in Caenorhabditis elegans.